A 261-amino-acid polypeptide reads, in one-letter code: Hydroxyethylthiazole kinase (261 aa).

Met40 is a substrate binding site. Residues Lys116 and Thr162 each contribute to the ATP site. A substrate-binding site is contributed by Gly189.

This sequence belongs to the Thz kinase family. The cofactor is Mg(2+).

The catalysed reaction is 5-(2-hydroxyethyl)-4-methylthiazole + ATP = 4-methyl-5-(2-phosphooxyethyl)-thiazole + ADP + H(+). It participates in cofactor biosynthesis; thiamine diphosphate biosynthesis; 4-methyl-5-(2-phosphoethyl)-thiazole from 5-(2-hydroxyethyl)-4-methylthiazole: step 1/1. Its function is as follows. Catalyzes the phosphorylation of the hydroxyl group of 4-methyl-5-beta-hydroxyethylthiazole (THZ). The sequence is that of Hydroxyethylthiazole kinase from Methanosarcina mazei (strain ATCC BAA-159 / DSM 3647 / Goe1 / Go1 / JCM 11833 / OCM 88) (Methanosarcina frisia).